The following is a 259-amino-acid chain: Imidazole glycerol phosphate synthase subunit HisF (259 aa).

Residues aspartate 11 and aspartate 130 contribute to the active site.

Belongs to the HisA/HisF family. In terms of assembly, heterodimer of HisH and HisF.

The protein resides in the cytoplasm. The enzyme catalyses 5-[(5-phospho-1-deoxy-D-ribulos-1-ylimino)methylamino]-1-(5-phospho-beta-D-ribosyl)imidazole-4-carboxamide + L-glutamine = D-erythro-1-(imidazol-4-yl)glycerol 3-phosphate + 5-amino-1-(5-phospho-beta-D-ribosyl)imidazole-4-carboxamide + L-glutamate + H(+). The protein operates within amino-acid biosynthesis; L-histidine biosynthesis; L-histidine from 5-phospho-alpha-D-ribose 1-diphosphate: step 5/9. In terms of biological role, IGPS catalyzes the conversion of PRFAR and glutamine to IGP, AICAR and glutamate. The HisF subunit catalyzes the cyclization activity that produces IGP and AICAR from PRFAR using the ammonia provided by the HisH subunit. The chain is Imidazole glycerol phosphate synthase subunit HisF from Desulfovibrio desulfuricans (strain ATCC 27774 / DSM 6949 / MB).